Reading from the N-terminus, the 594-residue chain is Potassium-transporting ATPase potassium-binding subunit (594 aa).

The next 10 helical transmembrane spans lie at 3 to 23, 67 to 87, 136 to 156, 179 to 199, 287 to 307, 314 to 334, 415 to 435, 453 to 473, 519 to 539, and 562 to 582; these read ADFL…APLL, AVAM…LQRL, ALTV…IALV, LYVL…QGVV, LEML…GEMV, VAIL…AAYF, GLYG…LMIG, VALV…VAVL, VLLG…ILAL, and LFVA…YVPA.

This sequence belongs to the KdpA family. As to quaternary structure, the system is composed of three essential subunits: KdpA, KdpB and KdpC.

The protein resides in the cell inner membrane. Part of the high-affinity ATP-driven potassium transport (or Kdp) system, which catalyzes the hydrolysis of ATP coupled with the electrogenic transport of potassium into the cytoplasm. This subunit binds the periplasmic potassium ions and delivers the ions to the membrane domain of KdpB through an intramembrane tunnel. The polypeptide is Potassium-transporting ATPase potassium-binding subunit (Bordetella bronchiseptica (strain ATCC BAA-588 / NCTC 13252 / RB50) (Alcaligenes bronchisepticus)).